A 181-amino-acid polypeptide reads, in one-letter code: RNA-binding protein (181 aa).

Residues 106–181 are disordered; that stretch reads FLTSVNPGES…DANTRKSKRK (76 aa). The span at 141 to 157 shows a compositional bias: basic residues; sequence RNSKKGAKKSSSARKKK. Low complexity predominate over residues 160-172; that stretch reads SSNSETDLSSDSD.

Belongs to the phytoreovirus RNA-binding protein family.

It is found in the host cytoplasm. Functionally, constituent of viral factories. Binds to ssRNA and dsRNA. The polypeptide is RNA-binding protein (Rice dwarf virus (isolate Akita) (RDV)).